A 99-amino-acid polypeptide reads, in one-letter code: uncharacterized protein (99 aa).

The N-terminal stretch at 1–17 is a signal peptide; sequence MMMNAFFPAMALMVLVG. A lipid anchor (N-palmitoyl cysteine) is attached at C18. C18 carries the S-diacylglycerol cysteine lipid modification.

It localises to the cell membrane. This is an uncharacterized protein from Shigella flexneri.